Here is a 274-residue protein sequence, read N- to C-terminus: 2,3,4,5-tetrahydropyridine-2,6-dicarboxylate N-succinyltransferase (274 aa).

Substrate contacts are provided by R106 and D143.

The protein belongs to the transferase hexapeptide repeat family. In terms of assembly, homotrimer.

The protein resides in the cytoplasm. It carries out the reaction (S)-2,3,4,5-tetrahydrodipicolinate + succinyl-CoA + H2O = (S)-2-succinylamino-6-oxoheptanedioate + CoA. Its pathway is amino-acid biosynthesis; L-lysine biosynthesis via DAP pathway; LL-2,6-diaminopimelate from (S)-tetrahydrodipicolinate (succinylase route): step 1/3. This is 2,3,4,5-tetrahydropyridine-2,6-dicarboxylate N-succinyltransferase from Rickettsia rickettsii (strain Sheila Smith).